The sequence spans 259 residues: Archaerhodopsin-2 (259 aa).

Positions 1–6 are excised as a propeptide; that stretch reads MDPIAL. Gln7 is modified (pyrrolidone carboxylic acid). The Extracellular portion of the chain corresponds to 7–18; the sequence is QAGFDLLNDGRP. A helical transmembrane segment spans residues 19–40; that stretch reads ETLWLGIGTLLMLIGTFYFIAR. At 41-49 the chain is on the cytoplasmic side; it reads GWGVTDKEA. The helical transmembrane segment at 50 to 71 threads the bilayer; sequence REYYAITILVPGIASAAYLAMF. Topologically, residues 72–90 are extracellular; the sequence is FGIGVTEVELASGTVLDIY. Residues 91–112 form a helical membrane-spanning segment; it reads YARYADWLFTTPLLLLDLALLA. Topologically, residues 113–115 are cytoplasmic; it reads KVD. Residues 116 to 138 traverse the membrane as a helical segment; the sequence is RVTIGTLIGVDALMIVTGLIGAL. Topologically, residues 139–142 are extracellular; sequence SKTP. Residues 143–171 form a helical membrane-spanning segment; the sequence is LARYTWWLFSTIAFLFVLYYLLTSLRSAA. Residues 172 to 174 lie on the Cytoplasmic side of the membrane; the sequence is AKR. Residues 175–203 traverse the membrane as a helical segment; the sequence is SEEVRSTFNTLTALVAVLWTAYPILWIVG. The Extracellular portion of the chain corresponds to 204–211; the sequence is TEGAGVVG. The chain crosses the membrane as a helical span at residues 212 to 244; the sequence is LGIETLAFMVLDVTAKVGFGFVLLRSRAILGET. Lys227 carries the post-translational modification N6-(retinylidene)lysine. Over 245–259 the chain is Cytoplasmic; that stretch reads EAPEPSAGADASAAD.

This sequence belongs to the archaeal/bacterial/fungal opsin family.

It localises to the cell membrane. Light-driven proton pump. It may interact with bacterioruberin in the claret membrane. This is Archaerhodopsin-2 from Halobacterium sp. (strain aus-2).